We begin with the raw amino-acid sequence, 584 residues long: Aspartate--tRNA(Asp/Asn) ligase (584 aa).

L-aspartate is bound at residue Glu177. Residues 201–204 (QLFK) form an aspartate region. Arg223 provides a ligand contact to L-aspartate. Residues 223-225 (RDE) and Gln232 each bind ATP. His447 lines the L-aspartate pocket. Position 481 (Glu481) interacts with ATP. Arg488 lines the L-aspartate pocket. 533 to 536 (GLDR) contacts ATP.

This sequence belongs to the class-II aminoacyl-tRNA synthetase family. Type 1 subfamily. Homodimer.

It localises to the cytoplasm. It catalyses the reaction tRNA(Asx) + L-aspartate + ATP = L-aspartyl-tRNA(Asx) + AMP + diphosphate. Aspartyl-tRNA synthetase with relaxed tRNA specificity since it is able to aspartylate not only its cognate tRNA(Asp) but also tRNA(Asn). Reaction proceeds in two steps: L-aspartate is first activated by ATP to form Asp-AMP and then transferred to the acceptor end of tRNA(Asp/Asn). The sequence is that of Aspartate--tRNA(Asp/Asn) ligase from Chlamydia caviae (strain ATCC VR-813 / DSM 19441 / 03DC25 / GPIC) (Chlamydophila caviae).